Reading from the N-terminus, the 465-residue chain is Presenilin spe-4 (465 aa).

Residues Met-1 to Arg-18 lie on the Cytoplasmic side of the membrane. A helical transmembrane segment spans residues Trp-19 to Tyr-39. The Lumenal segment spans residues Asn-40–Asn-71. The helical transmembrane segment at Gly-72–Phe-92 threads the bilayer. The Cytoplasmic segment spans residues Asp-93–Arg-96. A helical membrane pass occupies residues Ile-97–Thr-117. The Lumenal segment spans residues Leu-118–Met-136. The helical transmembrane segment at Thr-137–Phe-157 threads the bilayer. The Cytoplasmic segment spans residues Ser-158–Ser-160. The helical transmembrane segment at Ser-161–Leu-181 threads the bilayer. At Arg-182–Trp-190 the chain is on the lumenal side. The helical transmembrane segment at Phe-191–Leu-211 threads the bilayer. Residue Asp-200 is part of the active site. Residues Lys-212–Arg-389 lie on the Cytoplasmic side of the membrane. The interval Ile-287–Asp-356 is disordered. Residues Ser-326–Ser-350 show a composition bias toward low complexity. A helical membrane pass occupies residues Leu-390 to Cys-410. The active site involves Asp-394. Position 411 (Pro-411) is a topological domain, lumenal. Residues Phe-412 to Phe-432 traverse the membrane as a helical segment. Topologically, residues Ser-433–Thr-439 are cytoplasmic. A PAL motif is present at residues Pro-440–Leu-442. Residues Pro-440 to Trp-460 constitute an intramembrane region (helical). The Cytoplasmic segment spans residues Glu-461 to Gly-465.

This sequence belongs to the peptidase A22A family. In terms of assembly, homodimer. Potential component of the gamma-secretase complex, a complex probably composed of the presenilin homodimer (sel-12, hop-1 or spe-4), nicastrin (aph-2), aph-1 and pen-2.

The protein localises to the endoplasmic reticulum membrane. It localises to the golgi apparatus. Its subcellular location is the cis-Golgi network membrane. In terms of biological role, potential catalytic subunit of the gamma-secretase complex during spermatogenesis, an endoprotease complex that catalyzes the intramembrane cleavage of integral membrane proteins such as Notch receptors (lin-12 or glp-1). Involved in spermatid formation during meiosis II. May be required for proper localization of macromolecules that are subject to asymmetric partitioning during spermatogenesis. The protein is Presenilin spe-4 of Caenorhabditis elegans.